The following is a 946-amino-acid chain: MSKKRVHELGKQLKEQGIELSNQELVEKLHALGYLEVKSHSSSLEDDQAHAAYEKILAERKPKPAPVRPSGPGFVVRKRAHVEPPTVTAPAAPPPAEPEYAEPPQAEQAYEPEPQEAQPEAAPEPVAAPEQPAEAAPLAAQAAPSPGAEAAAPAAPQAQPAQPAAPVAPPAPSAQPSAPQPAAAQPRPPQPPMPSRPPPAGYRPAPPPGARPPMSAAPGAPAQPGAAAQPPRPPVDPRTLRPTSTQAVVISRPLVPVRRVTPPTSARQQFPVAPGPRALGEVRELKVVPGSLGREREFIDVSRDKRRGRQPGRPISEEQAKSLSGKELLQAAISDRAYIPIRGKKKKPTKKGAKTQITEKAEHKKVIRIEESISVSELSQVMGVKASDLIRKLMQMGKMVTINAQIDADTAAILALEHGYTVEKKGFEVEEFIPEVEVDESKLVIRPPVVTVMGHVDHGKTSLLDAIRQADVAAGEAGGITQHIGAYSVNTPQGPITFLDTPGHEAFTAMRQRGAQVTDLVVLVVAADDGVMPQTVESIKAAKAAGVTILVAINKVDKPQAAPERVMQQLTEYELVAEQWGGTTIMLPVSARTKQGIPELLEYIALQSEVLELKANPDKLAAGRVIEAKLEKGRGPVATVLVEEGTLRVGDALVTGVHFGRVRAMMNERGEQVDNVGPGYPVEVLGLSGVPVAGDEFDVVEDEKAAKEVAQHRATKQRQKELGGVKKATLEDLFAKAKTSGQKVLNLVVKADVQGSSEAVSQALEKAATKKVGVKILESAVGAITKSDVLTAAAGNAVIVGFNTKPESEIENIASQQGVKILMFGIIYEAVDRIREEMAGLLEPIIKEKPLGKAEVRQVFNIPRVGQIAGSAVTEGVVKRAGHVRVVRDRKVIFTGKIGSLKRVKDDVREVAQGFECGIGVDGFSDVKQGDILEVYELEEIRPSLD.

2 disordered regions span residues 58 to 250 (AERK…AVVI) and 301 to 324 (VSRD…KSLS). Low complexity-rich tracts occupy residues 102 to 165 (EPPQ…QPAA) and 174 to 185 (AQPSAPQPAAAQ). Pro residues predominate over residues 186 to 211 (PRPPQPPMPSRPPPAGYRPAPPPGAR). Low complexity predominate over residues 212–229 (PPMSAAPGAPAQPGAAAQ). The tr-type G domain maps to 445 to 614 (IRPPVVTVMG…ALQSEVLELK (170 aa)). The interval 454 to 461 (GHVDHGKT) is G1. 454–461 (GHVDHGKT) contacts GTP. The G2 stretch occupies residues 479-483 (GITQH). The G3 stretch occupies residues 500–503 (DTPG). Residues 500-504 (DTPGH) and 554-557 (NKVD) contribute to the GTP site. Residues 554-557 (NKVD) form a G4 region. Positions 590–592 (SAR) are G5.

This sequence belongs to the TRAFAC class translation factor GTPase superfamily. Classic translation factor GTPase family. IF-2 subfamily.

It is found in the cytoplasm. Its function is as follows. One of the essential components for the initiation of protein synthesis. Protects formylmethionyl-tRNA from spontaneous hydrolysis and promotes its binding to the 30S ribosomal subunits. Also involved in the hydrolysis of GTP during the formation of the 70S ribosomal complex. In Anaeromyxobacter sp. (strain K), this protein is Translation initiation factor IF-2.